A 111-amino-acid chain; its full sequence is MSDTLNRLAEVLEERKQAAPDSSYVASLYHKGLNKILEKLGEESVETIIAAKDAAVSKDYSDVIYETADLWFHSLVMLSALGQHPQAVLDELERRFGLSGHDEKAAREPSA.

The protein belongs to the PRA-PH family.

It localises to the cytoplasm. It carries out the reaction 1-(5-phospho-beta-D-ribosyl)-ATP + H2O = 1-(5-phospho-beta-D-ribosyl)-5'-AMP + diphosphate + H(+). It functions in the pathway amino-acid biosynthesis; L-histidine biosynthesis; L-histidine from 5-phospho-alpha-D-ribose 1-diphosphate: step 2/9. This chain is Phosphoribosyl-ATP pyrophosphatase, found in Pseudomonas putida (strain W619).